A 249-amino-acid polypeptide reads, in one-letter code: Ribonuclease 3 (249 aa).

The region spanning 20–149 is the RNase III domain; sequence FKEFQERISV…FIGALYLDQG (130 aa). Position 62 (Glu-62) interacts with Mg(2+). The active site involves Asp-66. Residues Asp-135 and Glu-138 each coordinate Mg(2+). Residue Glu-138 is part of the active site. In terms of domain architecture, DRBM spans 175–244; that stretch reads DFKSQLQEFV…AQEALAKMQK (70 aa). The segment at 223-249 is disordered; that stretch reads NGRSKKEAEQHAAQEALAKMQKHHTKQ.

It belongs to the ribonuclease III family. Homodimer. Mg(2+) serves as cofactor.

The protein resides in the cytoplasm. The enzyme catalyses Endonucleolytic cleavage to 5'-phosphomonoester.. Its function is as follows. Digests double-stranded RNA. Involved in the processing of primary rRNA transcript to yield the immediate precursors to the large and small rRNAs (23S and 16S). Processes some mRNAs, and tRNAs when they are encoded in the rRNA operon. Processes pre-crRNA and tracrRNA of type II CRISPR loci if present in the organism. This chain is Ribonuclease 3, found in Bacillus velezensis (strain DSM 23117 / BGSC 10A6 / LMG 26770 / FZB42) (Bacillus amyloliquefaciens subsp. plantarum).